Here is a 371-residue protein sequence, read N- to C-terminus: 4-hydroxy-3-methylbut-2-en-1-yl diphosphate synthase (flavodoxin) (371 aa).

Residues Cys270, Cys273, Cys305, and Glu312 each contribute to the [4Fe-4S] cluster site.

It belongs to the IspG family. The cofactor is [4Fe-4S] cluster.

It carries out the reaction (2E)-4-hydroxy-3-methylbut-2-enyl diphosphate + oxidized [flavodoxin] + H2O + 2 H(+) = 2-C-methyl-D-erythritol 2,4-cyclic diphosphate + reduced [flavodoxin]. It participates in isoprenoid biosynthesis; isopentenyl diphosphate biosynthesis via DXP pathway; isopentenyl diphosphate from 1-deoxy-D-xylulose 5-phosphate: step 5/6. Functionally, converts 2C-methyl-D-erythritol 2,4-cyclodiphosphate (ME-2,4cPP) into 1-hydroxy-2-methyl-2-(E)-butenyl 4-diphosphate. The sequence is that of 4-hydroxy-3-methylbut-2-en-1-yl diphosphate synthase (flavodoxin) from Psychrobacter arcticus (strain DSM 17307 / VKM B-2377 / 273-4).